The sequence spans 384 residues: tRNA-specific 2-thiouridylase MnmA (384 aa).

ATP contacts are provided by residues 29 to 36 (AMSGGVDS) and Leu-55. Cys-123 serves as the catalytic Nucleophile. A disulfide bridge links Cys-123 with Cys-220. Gly-147 serves as a coordination point for ATP. The interval 169–171 (RDQ) is interaction with tRNA. Catalysis depends on Cys-220, which acts as the Cysteine persulfide intermediate.

Belongs to the MnmA/TRMU family.

It is found in the cytoplasm. The enzyme catalyses S-sulfanyl-L-cysteinyl-[protein] + uridine(34) in tRNA + AH2 + ATP = 2-thiouridine(34) in tRNA + L-cysteinyl-[protein] + A + AMP + diphosphate + H(+). Its function is as follows. Catalyzes the 2-thiolation of uridine at the wobble position (U34) of tRNA, leading to the formation of s(2)U34. This is tRNA-specific 2-thiouridylase MnmA from Dinoroseobacter shibae (strain DSM 16493 / NCIMB 14021 / DFL 12).